A 114-amino-acid polypeptide reads, in one-letter code: Large ribosomal subunit protein bL19 (114 aa).

Belongs to the bacterial ribosomal protein bL19 family.

Functionally, this protein is located at the 30S-50S ribosomal subunit interface and may play a role in the structure and function of the aminoacyl-tRNA binding site. The polypeptide is Large ribosomal subunit protein bL19 (Clostridium acetobutylicum (strain ATCC 824 / DSM 792 / JCM 1419 / IAM 19013 / LMG 5710 / NBRC 13948 / NRRL B-527 / VKM B-1787 / 2291 / W)).